Reading from the N-terminus, the 235-residue chain is NAD-dependent protein deacylase (235 aa).

Residues 1–235 form the Deacetylase sirtuin-type domain; the sequence is MDLRLFKNIV…VPRFITQFLE (235 aa). 14 to 33 serves as a coordination point for NAD(+); that stretch reads GAGISAESGIRTFRDQDGLW. Substrate is bound by residues Tyr-58 and Arg-61. 95 to 98 contacts NAD(+); that stretch reads QNVD. The active-site Proton acceptor is His-113. Zn(2+) is bound by residues Cys-121, Cys-124, Cys-140, and Cys-143. NAD(+)-binding positions include 180-182, 204-206, and Ala-222; these read GTS and NLK.

The protein belongs to the sirtuin family. Class III subfamily. The cofactor is Zn(2+).

It is found in the cytoplasm. It carries out the reaction N(6)-acetyl-L-lysyl-[protein] + NAD(+) + H2O = 2''-O-acetyl-ADP-D-ribose + nicotinamide + L-lysyl-[protein]. The enzyme catalyses N(6)-succinyl-L-lysyl-[protein] + NAD(+) + H2O = 2''-O-succinyl-ADP-D-ribose + nicotinamide + L-lysyl-[protein]. Functionally, NAD-dependent lysine deacetylase and desuccinylase that specifically removes acetyl and succinyl groups on target proteins. Modulates the activities of several proteins which are inactive in their acylated form. The sequence is that of NAD-dependent protein deacylase from Bdellovibrio bacteriovorus (strain ATCC 15356 / DSM 50701 / NCIMB 9529 / HD100).